The sequence spans 139 residues: Trafficking protein particle complex subunit 2-like protein (139 aa).

The protein belongs to the TRAPP small subunits family. Sedlin subfamily. Component of the multisubunit TRAPP (transport protein particle) complex, which includes at least TRAPPC2, TRAPPC2L, TRAPPC3, TRAPPC3L, TRAPPC4, TRAPPC5, TRAPPC8, TRAPPC9, TRAPPC10, TRAPPC11 and TRAPPC12. Interacts with the heterodimer TRAPPC3-TRAPPC6A.

Its subcellular location is the cytoplasm. The protein resides in the perinuclear region. It localises to the endoplasmic reticulum. It is found in the golgi apparatus. May play a role in vesicular transport from endoplasmic reticulum to Golgi. This chain is Trafficking protein particle complex subunit 2-like protein (TRAPPC2L), found in Bos taurus (Bovine).